A 351-amino-acid chain; its full sequence is Protein EXPRESSION OF TERPENOIDS 1 (351 aa).

The disordered stretch occupies residues 1–23 (MANFFSLGGNQEQQHQEISSSQA). A compositionally biased stretch (low complexity) spans 11-22 (QEQQHQEISSSQ). Zn(2+) is bound by residues Cys-129, Cys-132, Cys-140, Cys-145, Cys-149, and Cys-156. The segment at residues 129–156 (CQDCGNQAKKDCQHMRCRTCCKSRGFQC) is a DNA-binding region (zn(2)-C6 fungal-type; degenerate). Positions 170–219 (RRERQQQLAALQQQQQGHNNNNNNHKNKRQREDPSASSLVSTRLPSNTNG) are disordered. Over residues 175–193 (QQLAALQQQQQGHNNNNNN) the composition is skewed to low complexity. The span at 204-219 (SASSLVSTRLPSNTNG) shows a compositional bias: polar residues. The Required for homo- and heterodimerization signature appears at 258–261 (IGGH). A disordered region spans residues 286-320 (TSSGGSAGGVQHHHHNSAAVATATTTSGGDATAAG). Positions 303 to 320 (AAVATATTTSGGDATAAG) are enriched in low complexity.

This sequence belongs to the SHI protein family. As to quaternary structure, forms homodimers and heterodimers with LRP1.

Its subcellular location is the nucleus. In terms of biological role, transcription activator involved in the transcriptional regulation of terpene biosynthesis in glandular trichomes. Binds to the promoter of the linalool synthase TPS5 and promotes TPS5 gene transactivation. Acts synergistically with MYC1 in the transactivation of TPS5. This Solanum lycopersicum (Tomato) protein is Protein EXPRESSION OF TERPENOIDS 1.